The sequence spans 180 residues: ATP synthase subunit delta (180 aa).

The protein belongs to the ATPase delta chain family. F-type ATPases have 2 components, F(1) - the catalytic core - and F(0) - the membrane proton channel. F(1) has five subunits: alpha(3), beta(3), gamma(1), delta(1), epsilon(1). F(0) has three main subunits: a(1), b(2) and c(10-14). The alpha and beta chains form an alternating ring which encloses part of the gamma chain. F(1) is attached to F(0) by a central stalk formed by the gamma and epsilon chains, while a peripheral stalk is formed by the delta and b chains.

It localises to the cell membrane. Its function is as follows. F(1)F(0) ATP synthase produces ATP from ADP in the presence of a proton or sodium gradient. F-type ATPases consist of two structural domains, F(1) containing the extramembraneous catalytic core and F(0) containing the membrane proton channel, linked together by a central stalk and a peripheral stalk. During catalysis, ATP synthesis in the catalytic domain of F(1) is coupled via a rotary mechanism of the central stalk subunits to proton translocation. This protein is part of the stalk that links CF(0) to CF(1). It either transmits conformational changes from CF(0) to CF(1) or is implicated in proton conduction. This is ATP synthase subunit delta from Lactobacillus delbrueckii subsp. bulgaricus (strain ATCC 11842 / DSM 20081 / BCRC 10696 / JCM 1002 / NBRC 13953 / NCIMB 11778 / NCTC 12712 / WDCM 00102 / Lb 14).